The following is a 113-amino-acid chain: Small ribosomal subunit protein eS24 (113 aa).

This sequence belongs to the eukaryotic ribosomal protein eS24 family.

This Metallosphaera sedula (strain ATCC 51363 / DSM 5348 / JCM 9185 / NBRC 15509 / TH2) protein is Small ribosomal subunit protein eS24.